Consider the following 532-residue polypeptide: E3 ubiquitin-protein ligase ICP0 (532 aa).

Zn(2+) is bound by residues Cys8, Cys11, Cys24, His26, Cys29, Cys32, Cys43, and Cys46. The RING-type zinc-finger motif lies at 8–47 (CPICLEDPSNYSMALPCLHAFCYVCITRWIRQNPTCPLCK). Disordered stretches follow at residues 206 to 391 (EYID…PMRP), 406 to 426 (APRDSSTSEAAGPSRLGAGPR), 461 to 498 (EDESARRRGNVLLRPRRQSVPPVPYPDIASTSPLIRQG), and 510 to 532 (QTQPAEPEEMRCPHNCQRYRRNQ). 2 stretches are compositionally biased toward acidic residues: residues 217-227 (SEEETDSDIEV) and 234-243 (DPEDTSDETS). The span at 286 to 295 (RSARLRRRQP) shows a compositional bias: basic residues.

Auto-ubiquitinated.

It catalyses the reaction S-ubiquitinyl-[E2 ubiquitin-conjugating enzyme]-L-cysteine + [acceptor protein]-L-lysine = [E2 ubiquitin-conjugating enzyme]-L-cysteine + N(6)-ubiquitinyl-[acceptor protein]-L-lysine.. Its function is as follows. Evades nuclear antiviral defenses triggered by dsDNA viruses. Acts during the initial stages of lytic infection and the reactivation of latent viral genome. Prevents the antiviral effect of nuclear bodies by degrading host PML and SP100. In Equus caballus (Horse), this protein is E3 ubiquitin-protein ligase ICP0 (63).